The chain runs to 123 residues: Large ribosomal subunit protein bL21 (123 aa).

The protein belongs to the bacterial ribosomal protein bL21 family. Part of the 50S ribosomal subunit. Contacts protein L20.

In terms of biological role, this protein binds to 23S rRNA in the presence of protein L20. The sequence is that of Large ribosomal subunit protein bL21 from Rippkaea orientalis (strain PCC 8801 / RF-1) (Cyanothece sp. (strain PCC 8801)).